The sequence spans 223 residues: Ribose-5-phosphate isomerase A (223 aa).

Residues 28-31 (TGST), 81-84 (DGTD), and 94-97 (KGGG) each bind substrate. E103 (proton acceptor) is an active-site residue. K121 contacts substrate.

Belongs to the ribose 5-phosphate isomerase family. In terms of assembly, homodimer.

The catalysed reaction is aldehydo-D-ribose 5-phosphate = D-ribulose 5-phosphate. Its pathway is carbohydrate degradation; pentose phosphate pathway; D-ribose 5-phosphate from D-ribulose 5-phosphate (non-oxidative stage): step 1/1. Catalyzes the reversible conversion of ribose-5-phosphate to ribulose 5-phosphate. The protein is Ribose-5-phosphate isomerase A of Baumannia cicadellinicola subsp. Homalodisca coagulata.